Here is a 198-residue protein sequence, read N- to C-terminus: Small ribosomal subunit protein uS7 (198 aa).

Belongs to the universal ribosomal protein uS7 family. In terms of assembly, part of the 30S ribosomal subunit.

In terms of biological role, one of the primary rRNA binding proteins, it binds directly to 16S rRNA where it nucleates assembly of the head domain of the 30S subunit. Is located at the subunit interface close to the decoding center. In Nanoarchaeum equitans (strain Kin4-M), this protein is Small ribosomal subunit protein uS7.